Reading from the N-terminus, the 277-residue chain is Diaminopimelate epimerase (277 aa).

Substrate contacts are provided by asparagine 13, glutamine 46, and asparagine 66. Cysteine 75 acts as the Proton donor in catalysis. Residues 76–77, asparagine 160, asparagine 193, and 211–212 each bind substrate; these read GN and ER. The active-site Proton acceptor is cysteine 220. 221–222 contributes to the substrate binding site; sequence GS.

This sequence belongs to the diaminopimelate epimerase family. As to quaternary structure, homodimer.

It is found in the cytoplasm. The enzyme catalyses (2S,6S)-2,6-diaminopimelate = meso-2,6-diaminopimelate. It participates in amino-acid biosynthesis; L-lysine biosynthesis via DAP pathway; DL-2,6-diaminopimelate from LL-2,6-diaminopimelate: step 1/1. Functionally, catalyzes the stereoinversion of LL-2,6-diaminopimelate (L,L-DAP) to meso-diaminopimelate (meso-DAP), a precursor of L-lysine and an essential component of the bacterial peptidoglycan. The polypeptide is Diaminopimelate epimerase (Legionella pneumophila (strain Corby)).